A 471-amino-acid polypeptide reads, in one-letter code: Extracellular endo-alpha-(1-&gt;5)-L-arabinanase (471 aa).

Positions 1–19 (MRFLFLMITLTALTGYILA) are cleaved as a signal peptide. Asp32 (proton acceptor) is an active-site residue. Substrate contacts are provided by residues Asp32, Gly117, 167–170 (NALD), 187–189 (SWF), and 219–223 (HSSME). Glu223 acts as the Proton donor in catalysis. His314 lines the Ca(2+) pocket.

This sequence belongs to the glycosyl hydrolase 43 family. In terms of assembly, monomer. Requires Ca(2+) as cofactor.

It is found in the secreted. The enzyme catalyses Endohydrolysis of (1-&gt;5)-alpha-arabinofuranosidic linkages in (1-&gt;5)-arabinans.. Its pathway is glycan metabolism; L-arabinan degradation. Functionally, involved in the degradation of arabinan and is a key enzyme in the complete degradation of the plant cell wall. Catalyzes the internal cleavage of alpha-(1-&gt;5)-L-arabinofuranosyl residues in different arabinan-containing polysaccharides, and releases arabinotriose and arabinobiose as end products. It acts on branched arabinan (from sugar beet), but more slowly when compared to linear or debranched arabinan. This is Extracellular endo-alpha-(1-&gt;5)-L-arabinanase from Thermotoga petrophila (strain ATCC BAA-488 / DSM 13995 / JCM 10881 / RKU-1).